Consider the following 717-residue polypeptide: ATP-dependent RNA helicase homolog DQX1 (717 aa).

The region spanning 57–225 (QLESNPTGVV…WGNPPIVHIP (169 aa)) is the Helicase ATP-binding domain. 70-77 (GEPGSGKS) provides a ligand contact to ATP. Residues 170–173 (DEAQ) carry the DEAQ box motif. The Helicase C-terminal domain occupies 248-447 (ACQAVLELCR…ALMQALEDLD (200 aa)). Residues 694-717 (GMADSTAGSKSSSAQEFRDPCVLQ) form a disordered region. Residues 699–708 (TAGSKSSSAQ) show a composition bias toward polar residues.

The protein localises to the nucleus. Functionally, might be involved in RNA metabolism; it is missing helicase motif III and may not have helicase activity. The protein is ATP-dependent RNA helicase homolog DQX1 (DQX1) of Homo sapiens (Human).